A 506-amino-acid chain; its full sequence is MVSIRPDEISAILKQQIEDYDKSVSVSNVGSVLQVGDGIARVYGLQQAMAGELLEFEDGTEGIALNLEDDNVGAVLMGEGLGIQEGSTVKATGKIASVPVGDAMLGRVINSLGRPIDGKGDIAASETRLIESMAPGIIQRKSVHEPMQTGITAIDAMIPVGRGQRELIIGDRQTGKTAIAIDTILNQADQDMICVYVAIGQKAASVANVVEVLRERGALGYTVIVAASASEPAALQYLAPYTGASIAEYFMYKGKATLVIYDDLSKQAAAYRQMSLLLRRPPGREAYPGDVFYCHSRLLERAAKLSDAMGKGSMTALPIIETQAGDVSAYIPTNVISITDGQIFLSSDLFNSGLRPAINVGISVSRVGGAAQTKAIKKIAGTLKLELAQFDELAAFSQFASDLDAATQQQLSRGKRLRELLKQPQFSPLILAEQVAIVYAGVKGLIDAVPVDQVVNFSRELREYLKSNKPEFINEIQEKKVLSPEAESVLKAAISEVVSTMVASAN.

170 to 177 (GDRQTGKT) provides a ligand contact to ATP.

Belongs to the ATPase alpha/beta chains family. As to quaternary structure, F-type ATPases have 2 components, CF(1) - the catalytic core - and CF(0) - the membrane proton channel. CF(1) has five subunits: alpha(3), beta(3), gamma(1), delta(1), epsilon(1). CF(0) has four main subunits: a(1), b(1), b'(1) and c(9-12).

The protein resides in the cellular thylakoid membrane. The enzyme catalyses ATP + H2O + 4 H(+)(in) = ADP + phosphate + 5 H(+)(out). Its function is as follows. Produces ATP from ADP in the presence of a proton gradient across the membrane. The alpha chain is a regulatory subunit. In Synechococcus sp. (strain CC9902), this protein is ATP synthase subunit alpha.